The primary structure comprises 290 residues: L-proline cis-3-hydroxylase 2 (290 aa).

Positions 107, 109, and 158 each coordinate Fe cation. R168 serves as a coordination point for 2-oxoglutarate.

This sequence belongs to the L-proline cis-4-/cis-3-hydroxylase family. As to quaternary structure, homodimer. Requires Fe(2+) as cofactor.

It carries out the reaction L-proline + 2-oxoglutarate + O2 = cis-3-hydroxy-L-proline + succinate + CO2. Its activity is regulated as follows. Inhibited by metal ions such as Co(2+), Zn(2+), Ni(2+) or Cu(2+). Is also inhibited by EDTA in vitro. Dioxygenase that catalyzes the 2-oxoglutarate-dependent selective hydroxylation of free L-proline to cis-3-hydroxy-L-proline (cis-3-Hyp). This chain is L-proline cis-3-hydroxylase 2, found in Streptomyces sp.